The sequence spans 334 residues: Phosphoribosylformylglycinamidine cyclo-ligase (334 aa).

Belongs to the AIR synthase family.

The protein localises to the cytoplasm. The catalysed reaction is 2-formamido-N(1)-(5-O-phospho-beta-D-ribosyl)acetamidine + ATP = 5-amino-1-(5-phospho-beta-D-ribosyl)imidazole + ADP + phosphate + H(+). It functions in the pathway purine metabolism; IMP biosynthesis via de novo pathway; 5-amino-1-(5-phospho-D-ribosyl)imidazole from N(2)-formyl-N(1)-(5-phospho-D-ribosyl)glycinamide: step 2/2. In Thermococcus kodakarensis (strain ATCC BAA-918 / JCM 12380 / KOD1) (Pyrococcus kodakaraensis (strain KOD1)), this protein is Phosphoribosylformylglycinamidine cyclo-ligase.